Here is a 343-residue protein sequence, read N- to C-terminus: Heat-inducible transcription repressor HrcA (343 aa).

This sequence belongs to the HrcA family.

Negative regulator of class I heat shock genes (grpE-dnaK-dnaJ and groELS operons). Prevents heat-shock induction of these operons. This is Heat-inducible transcription repressor HrcA from Clostridium acetobutylicum (strain ATCC 824 / DSM 792 / JCM 1419 / IAM 19013 / LMG 5710 / NBRC 13948 / NRRL B-527 / VKM B-1787 / 2291 / W).